Consider the following 306-residue polypeptide: Follistatin-related protein 1 (306 aa).

An N-terminal signal peptide occupies residues 1-18 (MWKRWLALSLVTIALVHG). The region spanning 28–51 (ICANVFCGAGRECAVTEKGEPTCL) is the Follistatin-like domain. Disulfide bonds link cysteine 29-cysteine 40, cysteine 34-cysteine 50, cysteine 52-cysteine 82, cysteine 56-cysteine 75, and cysteine 64-cysteine 96. A Kazal-like domain is found at 46 to 98 (GEPTCLCIEQCKPHKRPVCGSNGKTYLNHCELHRDACLTGSKIQVDYDGHCKE). Asparagine 142 carries N-linked (GlcNAc...) asparagine glycosylation. An EF-hand 1 domain is found at 142–176 (NYSEILDKYFKSFDNGDSHLDSSEFLKFVEQNETA). Serine 163 bears the Phosphoserine mark. Asparagine 173 and asparagine 178 each carry an N-linked (GlcNAc...) asparagine glycan. The 36-residue stretch at 191–226 (LRSLCVDALIELSDENADWKLSFQEFLKCLNPSFNP) folds into the EF-hand 2 domain. The VWFC domain occupies 231 to 285 (CALEDETYADGAETEVDCNRCVCSCGHWVCTAMTCDGKNQKGVQTHTEEEKTGYV).

As to quaternary structure, homodimer. Interacts with SCN10A. Interacts with DIP2A; DIP2A may act as a cell surface receptor for FSTL1. Interacts with BMP4. Interacts with CD14; this interaction promotes TL4-mediated signaling cascade. During central nervous system development, strongly expressed in the telencephalon, diencephalon, brainstem, limbic system and spinal cord. Widely expressed in all organs.

The protein resides in the secreted. In terms of biological role, secreted glycoprotein that is involved in various physiological processes, such as angiogenesis, regulation of the immune response, cell proliferation and differentiation. Plays a role in the development of the central nervous system, skeletal system, lungs, and ureter. Promotes endothelial cell survival, migration and differentiation into network structures in an AKT-dependent manner. Also promotes survival of cardiac myocytes. Initiates various signaling cascades by activating different receptors on the cell surface such as DIP2A, TLR4 or BMP receptors. This Mus musculus (Mouse) protein is Follistatin-related protein 1 (Fstl1).